The primary structure comprises 887 residues: Tiger protein O1 (887 aa).

The N-terminal stretch at 1-21 (MEKKLLIIVIVFLFSTIQVFC) is a signal peptide. Residues 22 to 845 (RIDDKTFVIS…SLSKKSIILL (824 aa)) lie on the Extracellular side of the membrane. N-linked (GlcNAc...) asparagine glycans are attached at residues Asn-32, Asn-70, Asn-186, Asn-207, Asn-219, Asn-259, Asn-297, Asn-314, Asn-325, Asn-338, Asn-354, Asn-393, Asn-431, Asn-588, Asn-629, Asn-652, Asn-687, Asn-710, Asn-720, Asn-730, Asn-775, Asn-788, Asn-811, and Asn-816. Positions 277–365 (NSVPYSKGGL…TNENKLLFNY (89 aa)) constitute an IPT/TIG 1 domain. The IPT/TIG 2 domain maps to 710–767 (NTSSINVNGGNLTIYGKNFYNVSNIKVEVDNQLKCNKIEFINLNSLTCFLPPFIETLF). Positions 811–835 (NDTSENSTNDILNHEKNNNNQKDGS) are disordered. The chain crosses the membrane as a helical span at residues 846–866 (SILLPSFIILIVSLAIVILVI). At 867-887 (KRNKTKHSKNMSSKEKELMKQ) the chain is on the cytoplasmic side.

The protein resides in the membrane. This is Tiger protein O1 (tgrO1) from Dictyostelium discoideum (Social amoeba).